The sequence spans 390 residues: Formamidopyrimidine-DNA glycosylase (390 aa).

Catalysis depends on P2, which acts as the Schiff-base intermediate with DNA. E3 serves as the catalytic Proton donor. The active-site Proton donor; for beta-elimination activity is K60. 4 residues coordinate DNA: Y107, R126, K167, and N186. Positions 283 to 390 are disordered; the sequence is AEKAAKVRPA…AGKKPKGRKS (108 aa). Residues 301-316 show a composition bias toward acidic residues; it reads DDGDGEEDEQETEKED. A compositionally biased stretch (basic residues) spans 321 to 337; the sequence is SKKGQKPRGGRGKKPAS. Residues 343-355 are compositionally biased toward acidic residues; it reads ESDDDGDDSEAEE. Basic residues predominate over residues 360–370; sequence PKGRGTKPAIK.

The protein belongs to the FPG family. In terms of assembly, monomer. In terms of tissue distribution, expressed in leaves (at protein levels).

The protein resides in the nucleus. It carries out the reaction Hydrolysis of DNA containing ring-opened 7-methylguanine residues, releasing 2,6-diamino-4-hydroxy-5-(N-methyl)formamidopyrimidine.. The enzyme catalyses 2'-deoxyribonucleotide-(2'-deoxyribose 5'-phosphate)-2'-deoxyribonucleotide-DNA = a 3'-end 2'-deoxyribonucleotide-(2,3-dehydro-2,3-deoxyribose 5'-phosphate)-DNA + a 5'-end 5'-phospho-2'-deoxyribonucleoside-DNA + H(+). Its function is as follows. Involved in base excision repair of DNA damaged by oxidation or by mutagenic agents. Acts as a DNA glycosylase that recognizes and removes damaged bases. Can process efficiently 4,6-diamino-5-formamidopyrimidine (FapyA), 2,6-diamino-4- hydroxy-5-formamidopyrimidine (FapyG) and the further oxidation products of 8-oxoguanine (8-oxoG), such as guanidinohydantoin and spiroiminodihydantoin. Has marginal activity towards 8-oxoG. Has AP (apurinic/apyrimidinic) lyase activity. Cleaves the DNA backbone by beta-delta elimination to generate a single-strand break at the site of the removed base with both 3'- and 5'-phosphates. The polypeptide is Formamidopyrimidine-DNA glycosylase (FPG1) (Arabidopsis thaliana (Mouse-ear cress)).